Reading from the N-terminus, the 188-residue chain is Ras-related protein Rap-1 (188 aa).

Residue 10-17 (GSGGVGKS) participates in GTP binding. Positions 32–40 (YDPTIEDSY) match the Effector region motif. GTP is bound by residues 57-61 (DTAGT) and 116-119 (NKCD).

Belongs to the small GTPase superfamily. Ras family.

It carries out the reaction GTP + H2O = GDP + phosphate + H(+). In terms of biological role, required in the hypodermis for proper formation of the cuticle. The sequence is that of Ras-related protein Rap-1 (rap-1) from Caenorhabditis elegans.